We begin with the raw amino-acid sequence, 188 residues long: Small ribosomal subunit protein uS7 (188 aa).

It belongs to the universal ribosomal protein uS7 family. As to quaternary structure, part of the 30S ribosomal subunit.

In terms of biological role, one of the primary rRNA binding proteins, it binds directly to 16S rRNA where it nucleates assembly of the head domain of the 30S subunit. Is located at the subunit interface close to the decoding center. The polypeptide is Small ribosomal subunit protein uS7 (Methanococcus aeolicus (strain ATCC BAA-1280 / DSM 17508 / OCM 812 / Nankai-3)).